The chain runs to 358 residues: Fructose-bisphosphate aldolase class 2 (358 aa).

Position 61 (serine 61) interacts with D-glyceraldehyde 3-phosphate. The active-site Proton donor is aspartate 109. Positions 110, 144, 174, and 226 each coordinate Zn(2+). Position 227 (glycine 227) interacts with dihydroxyacetone phosphate. Histidine 264 provides a ligand contact to Zn(2+). Dihydroxyacetone phosphate is bound by residues 265–267 (GGS) and 286–289 (NIDT).

It belongs to the class II fructose-bisphosphate aldolase family. Zn(2+) serves as cofactor.

The catalysed reaction is beta-D-fructose 1,6-bisphosphate = D-glyceraldehyde 3-phosphate + dihydroxyacetone phosphate. Its pathway is carbohydrate degradation; glycolysis; D-glyceraldehyde 3-phosphate and glycerone phosphate from D-glucose: step 4/4. Functionally, catalyzes the aldol condensation of dihydroxyacetone phosphate (DHAP or glycerone-phosphate) with glyceraldehyde 3-phosphate (G3P) to form fructose 1,6-bisphosphate (FBP) in gluconeogenesis and the reverse reaction in glycolysis. The protein is Fructose-bisphosphate aldolase class 2 (fbaA) of Buchnera aphidicola subsp. Acyrthosiphon pisum (strain APS) (Acyrthosiphon pisum symbiotic bacterium).